Consider the following 819-residue polypeptide: Leucine--tRNA ligase (819 aa).

Positions 51–61 (PYPSGNLHIGH) match the 'HIGH' region motif. Residues 586 to 590 (KMSKS) carry the 'KMSKS' region motif. Lys-589 lines the ATP pocket.

It belongs to the class-I aminoacyl-tRNA synthetase family.

The protein resides in the cytoplasm. The enzyme catalyses tRNA(Leu) + L-leucine + ATP = L-leucyl-tRNA(Leu) + AMP + diphosphate. This Deinococcus geothermalis (strain DSM 11300 / CIP 105573 / AG-3a) protein is Leucine--tRNA ligase.